The following is a 291-amino-acid chain: 33 kDa chaperonin (291 aa).

Cystine bridges form between cysteine 235-cysteine 237 and cysteine 268-cysteine 271.

It belongs to the HSP33 family. Under oxidizing conditions two disulfide bonds are formed involving the reactive cysteines. Under reducing conditions zinc is bound to the reactive cysteines and the protein is inactive.

Its subcellular location is the cytoplasm. In terms of biological role, redox regulated molecular chaperone. Protects both thermally unfolding and oxidatively damaged proteins from irreversible aggregation. Plays an important role in the bacterial defense system toward oxidative stress. The polypeptide is 33 kDa chaperonin (Streptococcus agalactiae serotype III (strain NEM316)).